Reading from the N-terminus, the 673-residue chain is DNA ligase (673 aa).

Residues 35–39 (DAEYD), 84–85 (SL), and glutamate 115 contribute to the NAD(+) site. The active-site N6-AMP-lysine intermediate is the lysine 117. NAD(+) is bound by residues arginine 138, glutamate 175, lysine 292, and lysine 316. Zn(2+) contacts are provided by cysteine 410, cysteine 413, cysteine 428, and cysteine 434. The region spanning 592–673 (PRKLPLQGLV…FLDLLERGRP (82 aa)) is the BRCT domain.

The protein belongs to the NAD-dependent DNA ligase family. LigA subfamily. Mg(2+) serves as cofactor. Requires Mn(2+) as cofactor.

The catalysed reaction is NAD(+) + (deoxyribonucleotide)n-3'-hydroxyl + 5'-phospho-(deoxyribonucleotide)m = (deoxyribonucleotide)n+m + AMP + beta-nicotinamide D-nucleotide.. Functionally, DNA ligase that catalyzes the formation of phosphodiester linkages between 5'-phosphoryl and 3'-hydroxyl groups in double-stranded DNA using NAD as a coenzyme and as the energy source for the reaction. It is essential for DNA replication and repair of damaged DNA. The protein is DNA ligase of Methylococcus capsulatus (strain ATCC 33009 / NCIMB 11132 / Bath).